A 59-amino-acid polypeptide reads, in one-letter code: Preprotein translocase subunit SecG (59 aa).

Residues 1-33 lie on the Cytoplasmic side of the membrane; sequence MARRESSGGSGGLMSSAGLMRYFEAEESAIKID. Residues 34–55 form a helical membrane-spanning segment; the sequence is PKTVIIAAVASGAFIWILNFTY. Over 56–59 the chain is Extracellular; the sequence is GRFW.

This sequence belongs to the SEC61-beta family. Component of the protein translocase complex. Heterotrimer consisting of alpha (SecY), beta (SecG) and gamma (SecE) subunits. Can form oligomers of the heterotrimer.

The protein localises to the cell membrane. Functionally, involved in protein export. The function of the beta subunit is unknown, but it may be involved in stabilization of the trimeric complex. The polypeptide is Preprotein translocase subunit SecG (Methanocella arvoryzae (strain DSM 22066 / NBRC 105507 / MRE50)).